Here is a 316-residue protein sequence, read N- to C-terminus: ATP synthase gamma chain (316 aa).

Belongs to the ATPase gamma chain family. As to quaternary structure, F-type ATPases have 2 components, CF(1) - the catalytic core - and CF(0) - the membrane proton channel. CF(1) has five subunits: alpha(3), beta(3), gamma(1), delta(1), epsilon(1). CF(0) has three main subunits: a, b and c.

Its subcellular location is the cellular thylakoid membrane. Produces ATP from ADP in the presence of a proton gradient across the membrane. The gamma chain is believed to be important in regulating ATPase activity and the flow of protons through the CF(0) complex. The protein is ATP synthase gamma chain of Synechococcus sp. (strain ATCC 27144 / PCC 6301 / SAUG 1402/1) (Anacystis nidulans).